Here is a 598-residue protein sequence, read N- to C-terminus: Elongation factor 4 (598 aa).

Residues glutamine 3 to glutamate 185 form the tr-type G domain. GTP contacts are provided by residues aspartate 15–threonine 20 and asparagine 132–aspartate 135.

Belongs to the TRAFAC class translation factor GTPase superfamily. Classic translation factor GTPase family. LepA subfamily.

It is found in the cell inner membrane. It carries out the reaction GTP + H2O = GDP + phosphate + H(+). Functionally, required for accurate and efficient protein synthesis under certain stress conditions. May act as a fidelity factor of the translation reaction, by catalyzing a one-codon backward translocation of tRNAs on improperly translocated ribosomes. Back-translocation proceeds from a post-translocation (POST) complex to a pre-translocation (PRE) complex, thus giving elongation factor G a second chance to translocate the tRNAs correctly. Binds to ribosomes in a GTP-dependent manner. The polypeptide is Elongation factor 4 (Nitrosomonas eutropha (strain DSM 101675 / C91 / Nm57)).